A 250-amino-acid chain; its full sequence is Ribonuclease 3 (250 aa).

The segment covering 1–15 has biased composition (basic residues); the sequence is MTKTPAKKKRARSSK. Positions 1–21 are disordered; sequence MTKTPAKKKRARSSKAKGTDA. The 129-residue stretch at 22-150 folds into the RNase III domain; the sequence is NAALEARIGH…VIGAIFLDGG (129 aa). Residue Glu-63 participates in Mg(2+) binding. Residue Asp-67 is part of the active site. Residues Asp-136 and Glu-139 each contribute to the Mg(2+) site. Glu-139 is an active-site residue. The DRBM domain occupies 175-244; the sequence is DPKTVLQEWA…ASVMIEREGV (70 aa).

The protein belongs to the ribonuclease III family. In terms of assembly, homodimer. It depends on Mg(2+) as a cofactor.

Its subcellular location is the cytoplasm. It catalyses the reaction Endonucleolytic cleavage to 5'-phosphomonoester.. In terms of biological role, digests double-stranded RNA. Involved in the processing of primary rRNA transcript to yield the immediate precursors to the large and small rRNAs (23S and 16S). Processes some mRNAs, and tRNAs when they are encoded in the rRNA operon. Processes pre-crRNA and tracrRNA of type II CRISPR loci if present in the organism. The polypeptide is Ribonuclease 3 (Bradyrhizobium diazoefficiens (strain JCM 10833 / BCRC 13528 / IAM 13628 / NBRC 14792 / USDA 110)).